Consider the following 425-residue polypeptide: Serine--tRNA ligase (425 aa).

231–233 (TAE) contacts L-serine. Residue 262 to 264 (RSE) coordinates ATP. E285 contacts L-serine. Residue 349 to 352 (EISS) coordinates ATP. Residue S385 coordinates L-serine.

The protein belongs to the class-II aminoacyl-tRNA synthetase family. Type-1 seryl-tRNA synthetase subfamily. As to quaternary structure, homodimer. The tRNA molecule binds across the dimer.

It localises to the cytoplasm. The catalysed reaction is tRNA(Ser) + L-serine + ATP = L-seryl-tRNA(Ser) + AMP + diphosphate + H(+). It catalyses the reaction tRNA(Sec) + L-serine + ATP = L-seryl-tRNA(Sec) + AMP + diphosphate + H(+). Its pathway is aminoacyl-tRNA biosynthesis; selenocysteinyl-tRNA(Sec) biosynthesis; L-seryl-tRNA(Sec) from L-serine and tRNA(Sec): step 1/1. Functionally, catalyzes the attachment of serine to tRNA(Ser). Is also able to aminoacylate tRNA(Sec) with serine, to form the misacylated tRNA L-seryl-tRNA(Sec), which will be further converted into selenocysteinyl-tRNA(Sec). This is Serine--tRNA ligase from Maricaulis maris (strain MCS10) (Caulobacter maris).